A 91-amino-acid polypeptide reads, in one-letter code: Small ribosomal subunit protein bS20 (91 aa).

2 disordered regions span residues 1-26 (MALR…RSRK) and 67-91 (HKNA…AQQS).

Belongs to the bacterial ribosomal protein bS20 family.

In terms of biological role, binds directly to 16S ribosomal RNA. This is Small ribosomal subunit protein bS20 from Deinococcus deserti (strain DSM 17065 / CIP 109153 / LMG 22923 / VCD115).